The following is a 165-amino-acid chain: Transmembrane protein 253 (165 aa).

3 helical membrane-spanning segments follow: residues 31-51 (LVLAVSQLWLAVAVVPFAVSV), 60-80 (MTTALPLGPGILGLLTGIVTL), and 91-111 (LAGLLVLELSAEAFTLGGVLV). Residues 145–165 (EEVPELETGPTVASTAKRTNQ) are disordered. Polar residues predominate over residues 155–165 (TVASTAKRTNQ).

The protein resides in the membrane. This is Transmembrane protein 253 (TMEM253) from Bos taurus (Bovine).